A 719-amino-acid chain; its full sequence is B3 domain-containing protein Os03g0120900 (719 aa).

The TF-B3 DNA-binding region spans H7–N110. Disordered regions lie at residues R328–Q381 and E412–V443. The span at D351–P366 shows a compositional bias: basic and acidic residues. Over residues H416–N430 the composition is skewed to polar residues.

Its subcellular location is the nucleus. The sequence is that of B3 domain-containing protein Os03g0120900 from Oryza sativa subsp. japonica (Rice).